The sequence spans 104 residues: MSQFENVTVVKAANVYYDGKVSSRTVLFADGSKKTLGLLLPGEYEFGTEAAEIMEMLAGDVDVLLPGETKWQSLSAGESFNVPANSKFGINVKTVADYCCSYID.

This sequence belongs to the nucleoside phosphorylase PpnP family.

The enzyme catalyses a purine D-ribonucleoside + phosphate = a purine nucleobase + alpha-D-ribose 1-phosphate. The catalysed reaction is adenosine + phosphate = alpha-D-ribose 1-phosphate + adenine. It catalyses the reaction cytidine + phosphate = cytosine + alpha-D-ribose 1-phosphate. It carries out the reaction guanosine + phosphate = alpha-D-ribose 1-phosphate + guanine. The enzyme catalyses inosine + phosphate = alpha-D-ribose 1-phosphate + hypoxanthine. The catalysed reaction is thymidine + phosphate = 2-deoxy-alpha-D-ribose 1-phosphate + thymine. It catalyses the reaction uridine + phosphate = alpha-D-ribose 1-phosphate + uracil. It carries out the reaction xanthosine + phosphate = alpha-D-ribose 1-phosphate + xanthine. Functionally, catalyzes the phosphorolysis of diverse nucleosides, yielding D-ribose 1-phosphate and the respective free bases. Can use uridine, adenosine, guanosine, cytidine, thymidine, inosine and xanthosine as substrates. Also catalyzes the reverse reactions. The sequence is that of Pyrimidine/purine nucleoside phosphorylase from Hydrogenovibrio crunogenus (strain DSM 25203 / XCL-2) (Thiomicrospira crunogena).